Reading from the N-terminus, the 185-residue chain is Probable chorismate pyruvate-lyase 2 (185 aa).

Residues Arg80, Leu118, and Glu170 each contribute to the substrate site.

It belongs to the UbiC family.

The protein localises to the cytoplasm. The enzyme catalyses chorismate = 4-hydroxybenzoate + pyruvate. The protein operates within cofactor biosynthesis; ubiquinone biosynthesis. Functionally, removes the pyruvyl group from chorismate, with concomitant aromatization of the ring, to provide 4-hydroxybenzoate (4HB) for the ubiquinone pathway. This chain is Probable chorismate pyruvate-lyase 2, found in Pseudomonas entomophila (strain L48).